Consider the following 379-residue polypeptide: UDP-N-acetylglucosamine--N-acetylmuramyl-(pentapeptide) pyrophosphoryl-undecaprenol N-acetylglucosamine transferase (379 aa).

UDP-N-acetyl-alpha-D-glucosamine is bound by residues 17 to 19, asparagine 128, arginine 169, serine 197, and glutamine 298; that span reads TGG.

It belongs to the glycosyltransferase 28 family. MurG subfamily.

Its subcellular location is the cell inner membrane. It carries out the reaction di-trans,octa-cis-undecaprenyl diphospho-N-acetyl-alpha-D-muramoyl-L-alanyl-D-glutamyl-meso-2,6-diaminopimeloyl-D-alanyl-D-alanine + UDP-N-acetyl-alpha-D-glucosamine = di-trans,octa-cis-undecaprenyl diphospho-[N-acetyl-alpha-D-glucosaminyl-(1-&gt;4)]-N-acetyl-alpha-D-muramoyl-L-alanyl-D-glutamyl-meso-2,6-diaminopimeloyl-D-alanyl-D-alanine + UDP + H(+). The protein operates within cell wall biogenesis; peptidoglycan biosynthesis. Cell wall formation. Catalyzes the transfer of a GlcNAc subunit on undecaprenyl-pyrophosphoryl-MurNAc-pentapeptide (lipid intermediate I) to form undecaprenyl-pyrophosphoryl-MurNAc-(pentapeptide)GlcNAc (lipid intermediate II). This is UDP-N-acetylglucosamine--N-acetylmuramyl-(pentapeptide) pyrophosphoryl-undecaprenol N-acetylglucosamine transferase from Brucella suis (strain ATCC 23445 / NCTC 10510).